The primary structure comprises 234 residues: Ribulose-phosphate 3-epimerase (234 aa).

Ser-7 is a substrate binding site. A divalent metal cation is bound by residues His-32, Asp-34, and His-65. The Proton acceptor role is filled by Asp-34. Substrate-binding positions include His-65, 139 to 142 (GFSG), 172 to 174 (DGG), and 194 to 195 (AS). Residue Asp-172 coordinates a divalent metal cation. Asp-172 acts as the Proton donor in catalysis.

This sequence belongs to the ribulose-phosphate 3-epimerase family. Requires a divalent metal cation as cofactor.

It carries out the reaction D-ribulose 5-phosphate = D-xylulose 5-phosphate. Its pathway is carbohydrate degradation. Its function is as follows. Catalyzes the reversible epimerization of D-ribulose 5-phosphate to D-xylulose 5-phosphate. The sequence is that of Ribulose-phosphate 3-epimerase from Methanocaldococcus jannaschii (strain ATCC 43067 / DSM 2661 / JAL-1 / JCM 10045 / NBRC 100440) (Methanococcus jannaschii).